The following is a 450-amino-acid chain: MDQEIFIIGLNHRTADVEVREKFALTGCTSLEPAVIPLGNGISEVIILSTCNRVEIMVAGRGDDVPDTVLSLWANARGQHPEELRPYVYIHRGLAAVEHLFTVASSLDSMVLGEPQILGQLKDAYRDAVARNTTRVILNRMMHKAFSVAKRVRTETAVASSAVSISYAAVELAKRIFGEMNEYKAMLIGAGEMAELAATHLLNCGVNKIYVANRTFERGLELAKQFDGEAILFEELFTRLPEVDIVISSTGAQQAVIRAKDIRDVLKRRKNRPMFFIDIAVPRDIDPDVNNLDNVYLYDIDDLKEVVEENLSHRREEAAKAKAIVRSETEVFGRWLRSLDLQPTIVDMYSRSTEIAQEELLKTLRRIGPVDESTQKALEAMLNAVVKKIHHEPICFLKRRYEEEDSGQRYIDFARRMFNLDNEPEQPEAHKNRKRPQPDLPAGCPGKTIL.

Residues 50–53, S109, 114–116, and Q120 contribute to the substrate site; these read TCNR and EPQ. C51 acts as the Nucleophile in catalysis. 189–194 contacts NADP(+); sequence GAGEMA. A disordered region spans residues 422–450; that stretch reads NEPEQPEAHKNRKRPQPDLPAGCPGKTIL.

It belongs to the glutamyl-tRNA reductase family. In terms of assembly, homodimer.

It carries out the reaction (S)-4-amino-5-oxopentanoate + tRNA(Glu) + NADP(+) = L-glutamyl-tRNA(Glu) + NADPH + H(+). Its pathway is porphyrin-containing compound metabolism; protoporphyrin-IX biosynthesis; 5-aminolevulinate from L-glutamyl-tRNA(Glu): step 1/2. Its function is as follows. Catalyzes the NADPH-dependent reduction of glutamyl-tRNA(Glu) to glutamate 1-semialdehyde (GSA). The chain is Glutamyl-tRNA reductase from Oleidesulfovibrio alaskensis (strain ATCC BAA-1058 / DSM 17464 / G20) (Desulfovibrio alaskensis).